A 411-amino-acid polypeptide reads, in one-letter code: ATP phosphoribosyltransferase 1, chloroplastic (411 aa).

Polar residues predominate over residues 1 to 12; the sequence is MSLLLPTNLQQY. The tract at residues 1–27 is disordered; sequence MSLLLPTNLQQYPSSSSFPSSTPILSP. The N-terminal 49 residues, 1 to 49, are a transit peptide targeting the chloroplast; it reads MSLLLPTNLQQYPSSSSFPSSTPILSPPPSTAFSVIVPRRRCLRLVTSC. The segment covering 13–24 has biased composition (low complexity); that stretch reads PSSSSFPSSTPI. Val-50 carries the N-acetylvaline modification.

It belongs to the ATP phosphoribosyltransferase family. Long subfamily. It depends on Mg(2+) as a cofactor. Expressed in leaves and at lower levels in roots (at protein level).

It is found in the plastid. Its subcellular location is the chloroplast. It catalyses the reaction 1-(5-phospho-beta-D-ribosyl)-ATP + diphosphate = 5-phospho-alpha-D-ribose 1-diphosphate + ATP. It functions in the pathway amino-acid biosynthesis; L-histidine biosynthesis; L-histidine from 5-phospho-alpha-D-ribose 1-diphosphate: step 1/9. Feedback inhibited by L-histidine. Catalyzes the condensation of ATP and 5-phosphoribose 1-diphosphate to form N'-(5'-phosphoribosyl)-ATP (PR-ATP). The chain is ATP phosphoribosyltransferase 1, chloroplastic (HISN1A) from Arabidopsis thaliana (Mouse-ear cress).